A 183-amino-acid polypeptide reads, in one-letter code: Protein P7 (183 aa).

Its subcellular location is the host nucleus. May play a role in inhibition of the host immune system by counteracting the type I interferon response. The chain is Protein P7 from Gadus morhua (Atlantic cod).